The sequence spans 366 residues: GTPase Obg (366 aa).

Residues 1–159 form the Obg domain; it reads MKFLDEAKVY…KTIWLRLKLI (159 aa). The OBG-type G domain occupies 160 to 327; sequence ADAGLVGLPN…VLRALRDVIV (168 aa). Residues 166–173, 191–195, 212–215, 279–282, and 308–310 each bind GTP; these read GLPNAGKS, FTTLH, DIPG, SQID, and SAI. Mg(2+)-binding residues include Ser173 and Thr193. A disordered region spans residues 333–366; that stretch reads DDETISQRPKKHRHKLEDRPQHENGPEESEEGEE. A compositionally biased stretch (basic and acidic residues) spans 347 to 357; the sequence is KLEDRPQHENG.

Belongs to the TRAFAC class OBG-HflX-like GTPase superfamily. OBG GTPase family. As to quaternary structure, monomer. The cofactor is Mg(2+).

The protein localises to the cytoplasm. Its function is as follows. An essential GTPase which binds GTP, GDP and possibly (p)ppGpp with moderate affinity, with high nucleotide exchange rates and a fairly low GTP hydrolysis rate. Plays a role in control of the cell cycle, stress response, ribosome biogenesis and in those bacteria that undergo differentiation, in morphogenesis control. In Allorhizobium ampelinum (strain ATCC BAA-846 / DSM 112012 / S4) (Agrobacterium vitis (strain S4)), this protein is GTPase Obg.